A 300-amino-acid chain; its full sequence is Delta(7)-sterol 5(6)-desaturase erg31 (300 aa).

A run of 3 helical transmembrane segments spans residues 33-53, 78-98, and 117-137; these read ISLF…FASL, VLTA…WFLA, and YFLC…YWAH. The 126-residue stretch at 123–248 folds into the Fatty acid hydroxylase domain; it reads PLFVMFSDFG…FTTLFDRLGN (126 aa). The short motif at 137 to 141 is the Histidine box-1 element; sequence HRFLH. Positions 150–154 match the Histidine box-2 motif; sequence HKLHH. A helical membrane pass occupies residues 180-200; sequence HLFPFFFPLHKLTYLALFTFV. The short motif at 225–229 is the Histidine box-3 element; the sequence is HNGHH.

It belongs to the sterol desaturase family. Fe cation serves as cofactor.

It is found in the endoplasmic reticulum membrane. The enzyme catalyses episterol + 2 Fe(II)-[cytochrome b5] + O2 + 2 H(+) = 5-dehydroepisterol + 2 Fe(III)-[cytochrome b5] + 2 H2O. Its pathway is steroid metabolism; ergosterol biosynthesis. Functionally, C-5 sterol desaturase; part of the third module of ergosterol biosynthesis pathway that includes by the late steps of the pathway. Erg31 and erg32 catalyze the introduction of a C-5 double bond in the B ring to produce 5-dehydroepisterol. The third module or late pathway involves the ergosterol synthesis itself through consecutive reactions that mainly occur in the endoplasmic reticulum (ER) membrane. Firstly, the squalene synthase erg9 catalyzes the condensation of 2 farnesyl pyrophosphate moieties to form squalene, which is the precursor of all steroids. Secondly, squalene is converted into lanosterol by the consecutive action of the squalene epoxidase erg1 and the lanosterol synthase erg7. The lanosterol 14-alpha-demethylase erg11/cyp1 catalyzes C14-demethylation of lanosterol to produce 4,4'-dimethyl cholesta-8,14,24-triene-3-beta-ol. In the next steps, a complex process involving various demethylation, reduction and desaturation reactions catalyzed by the C-14 reductase erg24 and the C-4 demethylation complex erg25-erg26-erg27 leads to the production of zymosterol. Erg28 likely functions in the C-4 demethylation complex reaction by tethering erg26 and Erg27 to the endoplasmic reticulum or to facilitate interaction between these proteins. Then, the sterol 24-C-methyltransferase erg6 catalyzes the methyl transfer from S-adenosyl-methionine to the C-24 of zymosterol to form fecosterol. The C-8 sterol isomerase erg2 catalyzes the reaction which results in unsaturation at C-7 in the B ring of sterols and thus converts fecosterol to episterol. The sterol-C5-desaturases erg31 and erg32 then catalyze the introduction of a C-5 double bond in the B ring to produce 5-dehydroepisterol. The C-22 sterol desaturase erg5 further converts 5-dehydroepisterol into ergosta-5,7,22,24(28)-tetraen-3beta-ol by forming the C-22(23) double bond in the sterol side chain. Finally, ergosta-5,7,22,24(28)-tetraen-3beta-ol is substrate of the C-24(28) sterol reductase erg4 to produce ergosterol. In the genus Schizosaccharomyces, a second route exists between lanosterol and fecosterol, via the methylation of lanosterol to eburicol by erg6, followed by C14-demethylation by erg11/cyp1 and C4-demethylation by the demethylation complex erg25-erg26-erg27. This is Delta(7)-sterol 5(6)-desaturase erg31 from Schizosaccharomyces pombe (strain 972 / ATCC 24843) (Fission yeast).